The sequence spans 34 residues: Somatostatin (34 aa).

Residues 1–20 (AVERPRQDGQVHEPPGRERK) are disordered. C23 and C34 are disulfide-bonded.

The protein belongs to the somatostatin family.

Its subcellular location is the secreted. Functionally, somatostatin inhibits the release of somatotropin. The polypeptide is Somatostatin (sst) (Myxine glutinosa (Atlantic hagfish)).